The following is a 635-amino-acid chain: tRNA 5-methylaminomethyl-2-thiouridine biosynthesis bifunctional protein MnmC (635 aa).

Positions 1–231 (MPITPASLSF…KRQMLRGRYL (231 aa)) are tRNA (mnm(5)s(2)U34)-methyltransferase. The tract at residues 249-635 (IGAGVAGTSI…RPARTLRGED (387 aa)) is FAD-dependent cmnm(5)s(2)U34 oxidoreductase.

The protein in the N-terminal section; belongs to the methyltransferase superfamily. tRNA (mnm(5)s(2)U34)-methyltransferase family. This sequence in the C-terminal section; belongs to the DAO family. FAD is required as a cofactor.

Its subcellular location is the cytoplasm. The enzyme catalyses 5-aminomethyl-2-thiouridine(34) in tRNA + S-adenosyl-L-methionine = 5-methylaminomethyl-2-thiouridine(34) in tRNA + S-adenosyl-L-homocysteine + H(+). Its function is as follows. Catalyzes the last two steps in the biosynthesis of 5-methylaminomethyl-2-thiouridine (mnm(5)s(2)U) at the wobble position (U34) in tRNA. Catalyzes the FAD-dependent demodification of cmnm(5)s(2)U34 to nm(5)s(2)U34, followed by the transfer of a methyl group from S-adenosyl-L-methionine to nm(5)s(2)U34, to form mnm(5)s(2)U34. The protein is tRNA 5-methylaminomethyl-2-thiouridine biosynthesis bifunctional protein MnmC of Azoarcus sp. (strain BH72).